Here is a 1438-residue protein sequence, read N- to C-terminus: MAMTEQQKFKVLADQIKISNQLDAEILNSGELTRIDVSNKNRTWEFHITLPQFLAHEDYLLFINAIEQEFKDIANVTCRFTVTNGTNQDEHAIKYFGHCIDQTALSPKVKGQLKQKKLIMSGKVLKVMVSNDIERNHFDKACNGSLIKAFRNCGFDIDKIIFETNDNDQEQNLASLEAHIQEEDEQSARLATEKLEKMKAEKAKQQDNNESAVDKCQIGKPIQIENIKPIESIIEEEFKVAIEGVIFDINLKELKSGRHIVEIKVTDYTDSLVLKMFTRKNKDDLEHFKALSVGKWVRAQGRIEEDTFIRDLVMMMSDIEEIKKATKKDKAEEKRVEFHLHTAMSQMDGIPNIGAYVKQAADWGHPAIAVTDHNVVQAFPDAHAAAEKHGIKMIYGMEGMLVDDGVPIAYKPQDVVLKDATYVVFDVETTGLSNQYDKIIELAAVKVHNGEIIDKFERFSNPHERLSETIINLTHITDDMLVDAPEIEEVLTEFKEWVGDAIFVAHNASFDMGFIDTGYERLGFGPSTNGVIDTLELSRTINTEYGKHGLNFLAKKYGVELTQHHRAIYDTEATAYIFIKMVQQMKELGVLNHNEINKKLSNEDAYKRARPSHVTLIVQNQQGLKNLFKIVSASLVKYFYRTPRIPRSLLDEYREGLLVGTACDEGELFTAVMQKDQSQVEKIAKYYDFIEIQPPALYQDLIDRELIRDTETLHEIYQRLIHAGDTAGIPVIATGNAHYLFEHDGIARKILIASQPGNPLNRSTLPEAHFRTTDEMLNEFHFLGEEKAHEIVVKNTNELADRIERVVPIKDELYTPRMEGANEEIRELSYTNARKLYGEDLPQIVIDRLEKELKSIIGNGFAVIYLISQRLVKKSLDDGYLVGSRGSVGSSFVATMTEITEVNPLPPHYICPNCKTSEFFNDGSVGSGFDLPDKTCETCGAPLIKEGQDIPFETFLGFKGDKVPDIDLNFSGEYQPNAHNYTKVLFGEDKVFRAGTIGTVAEKTAFGYVKGYLNDQGIHKRGAEIDRLVKGCTGVKRTTGQHPGGIIVVPDYMDIYDFTPIQYPADDQNSAWMTTHFDFHSIHDNVLKLDILGHDDPTMIRMLQDLSGIDPKTIPVDDKEVMQIFSTPESLGVTEDEILCKTGTFGVPEFGTGFVRQMLEDTKPTTFSELVQISGLSHGTDVWLGNAQELIKTGICDLSSVIGCRDDIMVYLMYAGLEPSMAFKIMESVRKGKGLTEEMIETMKENEVPDWYLDSCLKIKYMFPKAHAAAYVLMAVRIAYFKVHHPLYYYASYFTIRASDFDLITMIKDKTSIRNTVKDMYSRYMDLGKKEKDVLTVLEIMNEMAHRGYRMQPISLEKSQAFEFIIEGDTLIPPFISVPGLGENVAKRIVEARDDGPFLSKEDLNKKAGLSQKIIEYLDELGSLPNLPDKAQLSIFDM.

The 157-residue stretch at 422-578 (YVVFDVETTG…YDTEATAYIF (157 aa)) folds into the Exonuclease domain.

Belongs to the DNA polymerase type-C family. PolC subfamily.

Its subcellular location is the cytoplasm. The catalysed reaction is DNA(n) + a 2'-deoxyribonucleoside 5'-triphosphate = DNA(n+1) + diphosphate. Required for replicative DNA synthesis. This DNA polymerase also exhibits 3' to 5' exonuclease activity. The sequence is that of DNA polymerase III PolC-type from Staphylococcus aureus (strain Mu3 / ATCC 700698).